We begin with the raw amino-acid sequence, 416 residues long: Serine hydroxymethyltransferase (416 aa).

Residues Leu-118 and 122–124 (GHL) contribute to the (6S)-5,6,7,8-tetrahydrofolate site. Lys-226 is modified (N6-(pyridoxal phosphate)lysine). (6S)-5,6,7,8-tetrahydrofolate is bound at residue Glu-242.

Belongs to the SHMT family. In terms of assembly, homodimer. The cofactor is pyridoxal 5'-phosphate.

The protein resides in the cytoplasm. It catalyses the reaction (6R)-5,10-methylene-5,6,7,8-tetrahydrofolate + glycine + H2O = (6S)-5,6,7,8-tetrahydrofolate + L-serine. It participates in one-carbon metabolism; tetrahydrofolate interconversion. The protein operates within amino-acid biosynthesis; glycine biosynthesis; glycine from L-serine: step 1/1. In terms of biological role, catalyzes the reversible interconversion of serine and glycine with tetrahydrofolate (THF) serving as the one-carbon carrier. This reaction serves as the major source of one-carbon groups required for the biosynthesis of purines, thymidylate, methionine, and other important biomolecules. Also exhibits THF-independent aldolase activity toward beta-hydroxyamino acids, producing glycine and aldehydes, via a retro-aldol mechanism. This chain is Serine hydroxymethyltransferase, found in Helicobacter pylori (strain J99 / ATCC 700824) (Campylobacter pylori J99).